The sequence spans 134 residues: Small ribosomal subunit protein uS8c (134 aa).

Belongs to the universal ribosomal protein uS8 family. Part of the 30S ribosomal subunit.

The protein resides in the plastid. Its subcellular location is the chloroplast. Its function is as follows. One of the primary rRNA binding proteins, it binds directly to 16S rRNA central domain where it helps coordinate assembly of the platform of the 30S subunit. The sequence is that of Small ribosomal subunit protein uS8c (rps8) from Lepidium virginicum (Virginia pepperweed).